An 81-amino-acid chain; its full sequence is ATP synthase subunit c (81 aa).

Helical transmembrane passes span 5-25 and 57-77; these read IAAG…IGAG and VGLV…FVFA.

Belongs to the ATPase C chain family. In terms of assembly, F-type ATPases have 2 components, F(1) - the catalytic core - and F(0) - the membrane proton channel. F(1) has five subunits: alpha(3), beta(3), gamma(1), delta(1), epsilon(1). F(0) has three main subunits: a(1), b(2) and c(10-14). The alpha and beta chains form an alternating ring which encloses part of the gamma chain. F(1) is attached to F(0) by a central stalk formed by the gamma and epsilon chains, while a peripheral stalk is formed by the delta and b chains.

It is found in the cell membrane. Functionally, f(1)F(0) ATP synthase produces ATP from ADP in the presence of a proton or sodium gradient. F-type ATPases consist of two structural domains, F(1) containing the extramembraneous catalytic core and F(0) containing the membrane proton channel, linked together by a central stalk and a peripheral stalk. During catalysis, ATP synthesis in the catalytic domain of F(1) is coupled via a rotary mechanism of the central stalk subunits to proton translocation. Key component of the F(0) channel; it plays a direct role in translocation across the membrane. A homomeric c-ring of between 10-14 subunits forms the central stalk rotor element with the F(1) delta and epsilon subunits. The chain is ATP synthase subunit c from Mycobacterium bovis (strain ATCC BAA-935 / AF2122/97).